The primary structure comprises 83 residues: RNA-binding protein Hfq (83 aa).

In terms of domain architecture, Sm spans 9–69 (DYFLNQLRKD…ISTFAPARNV (61 aa)).

The protein belongs to the Hfq family. Homohexamer.

Functionally, RNA chaperone that binds small regulatory RNA (sRNAs) and mRNAs to facilitate mRNA translational regulation in response to envelope stress, environmental stress and changes in metabolite concentrations. Also binds with high specificity to tRNAs. The sequence is that of RNA-binding protein Hfq from Exiguobacterium sibiricum (strain DSM 17290 / CCUG 55495 / CIP 109462 / JCM 13490 / 255-15).